Reading from the N-terminus, the 390-residue chain is Chorismate synthase (390 aa).

NADP(+)-binding residues include R40 and R46. Residues 129–131, 249–250, G294, 309–313, and R335 contribute to the FMN site; these read RAS, QA, and KPIPT.

This sequence belongs to the chorismate synthase family. In terms of assembly, homotetramer. FMNH2 is required as a cofactor.

It catalyses the reaction 5-O-(1-carboxyvinyl)-3-phosphoshikimate = chorismate + phosphate. Its pathway is metabolic intermediate biosynthesis; chorismate biosynthesis; chorismate from D-erythrose 4-phosphate and phosphoenolpyruvate: step 7/7. In terms of biological role, catalyzes the anti-1,4-elimination of the C-3 phosphate and the C-6 proR hydrogen from 5-enolpyruvylshikimate-3-phosphate (EPSP) to yield chorismate, which is the branch point compound that serves as the starting substrate for the three terminal pathways of aromatic amino acid biosynthesis. This reaction introduces a second double bond into the aromatic ring system. The polypeptide is Chorismate synthase (Desulforudis audaxviator (strain MP104C)).